The primary structure comprises 426 residues: Enolase (426 aa).

Position 163 (Gln-163) interacts with (2R)-2-phosphoglycerate. Glu-205 acts as the Proton donor in catalysis. Mg(2+) contacts are provided by Asp-242, Glu-285, and Asp-312. Positions 337, 366, 367, and 388 each coordinate (2R)-2-phosphoglycerate. The active-site Proton acceptor is Lys-337.

The protein belongs to the enolase family. It depends on Mg(2+) as a cofactor.

The protein localises to the cytoplasm. It is found in the secreted. Its subcellular location is the cell surface. The enzyme catalyses (2R)-2-phosphoglycerate = phosphoenolpyruvate + H2O. It functions in the pathway carbohydrate degradation; glycolysis; pyruvate from D-glyceraldehyde 3-phosphate: step 4/5. Its function is as follows. Catalyzes the reversible conversion of 2-phosphoglycerate (2-PG) into phosphoenolpyruvate (PEP). It is essential for the degradation of carbohydrates via glycolysis. The sequence is that of Enolase from Caulobacter vibrioides (strain ATCC 19089 / CIP 103742 / CB 15) (Caulobacter crescentus).